Consider the following 128-residue polypeptide: Azurin (128 aa).

Residues 1–128 form the Plastocyanin-like domain; sequence ACDVSIEGND…IMKGTIELGS (128 aa). The cysteines at positions 2 and 25 are disulfide-linked. Cu cation-binding residues include His45, Cys111, His116, and Met120.

As to quaternary structure, monomer. Interacts with the AAUA/AAUB heterotetramer complex. It depends on Cu cation as a cofactor.

The protein resides in the periplasm. Functionally, transfers electrons from cytochrome c551 to cytochrome oxidase. Transfers electrons from the tryptophan tryptophylquinone of the aromatic amine dehydrogenase heterotetramer. This is Azurin from Alcaligenes faecalis.